The following is a 414-amino-acid chain: Methylthioribose-1-phosphate isomerase (414 aa).

Polar residues predominate over residues 205-215; that stretch reads SQSQGSENPPS. The disordered stretch occupies residues 205-224; the sequence is SQSQGSENPPSKKQKKDAAP. Asp283 functions as the Proton donor in the catalytic mechanism.

It belongs to the eIF-2B alpha/beta/delta subunits family. MtnA subfamily.

The protein resides in the cytoplasm. The protein localises to the nucleus. It catalyses the reaction 5-(methylsulfanyl)-alpha-D-ribose 1-phosphate = 5-(methylsulfanyl)-D-ribulose 1-phosphate. The protein operates within amino-acid biosynthesis; L-methionine biosynthesis via salvage pathway; L-methionine from S-methyl-5-thio-alpha-D-ribose 1-phosphate: step 1/6. Functionally, catalyzes the interconversion of methylthioribose-1-phosphate (MTR-1-P) into methylthioribulose-1-phosphate (MTRu-1-P). In Zygosaccharomyces rouxii (strain ATCC 2623 / CBS 732 / NBRC 1130 / NCYC 568 / NRRL Y-229), this protein is Methylthioribose-1-phosphate isomerase.